We begin with the raw amino-acid sequence, 531 residues long: Glucose-6-phosphate exchanger SLC37A1 (531 aa).

The chain crosses the membrane as a helical span at residues 18-38; it reads QWYRAFIFMLTFLLYASFHLS. Positions 53 to 72 are disordered; that stretch reads CTAGDGPESPFSDPSSSTRH. 11 helical membrane-spanning segments follow: residues 100 to 120, 129 to 149, 157 to 177, 192 to 214, 222 to 242, 332 to 352, 364 to 384, 392 to 412, 419 to 439, 464 to 484, and 488 to 508; these read GALD…SGII, YLTF…LGYF, FYVV…PSVV, IMGI…AGYW, SFIV…LFLI, LCLL…PLYI, GELS…AGVI, ASTC…FSSV, ATIA…ALIT, AIID…AGLI, and GWSN…LFLV.

It belongs to the major facilitator superfamily. Organophosphate:Pi antiporter (OPA) (TC 2.A.1.4) family.

Its subcellular location is the endoplasmic reticulum membrane. The enzyme catalyses D-glucose 6-phosphate(in) + phosphate(out) = D-glucose 6-phosphate(out) + phosphate(in). Inhibited by vanadate but not by chlorogenic acid. Inorganic phosphate and glucose-6-phosphate antiporter. May transport cytoplasmic glucose-6-phosphate into the lumen of the endoplasmic reticulum and translocate inorganic phosphate into the opposite direction. Independent of a lumenal glucose-6-phosphatase. May not play a role in homeostatic regulation of blood glucose levels. In Mus musculus (Mouse), this protein is Glucose-6-phosphate exchanger SLC37A1.